A 144-amino-acid chain; its full sequence is Bacilliredoxin BT9727_3899 (144 aa).

The protein belongs to the bacilliredoxin family.

The sequence is that of Bacilliredoxin BT9727_3899 from Bacillus thuringiensis subsp. konkukian (strain 97-27).